We begin with the raw amino-acid sequence, 250 residues long: rRNA methyltransferase 2, mitochondrial (250 aa).

The transit peptide at 1–35 (MRLVFTGNCVFKRLLHTEIGGKYAKQQPRNLKGRS) directs the protein to the mitochondrion. S-adenosyl-L-methionine is bound by residues 90-93 (PGSW), Asp119, 136-137 (DF), and Asp161. Lys201 acts as the Proton acceptor in catalysis.

Belongs to the class I-like SAM-binding methyltransferase superfamily. RNA methyltransferase RlmE family.

It is found in the mitochondrion. The catalysed reaction is a uridine in rRNA + S-adenosyl-L-methionine = a 2'-O-methyluridine in rRNA + S-adenosyl-L-homocysteine + H(+). In terms of biological role, S-adenosyl-L-methionine-dependent 2'-O-ribose methyltransferase that catalyzes the formation of 2'-O-methyluridine at position 1579 (Um1579) in the mitochondrial large subunit ribosomal RNA (mtLSU rRNA), a universally conserved modification in the peptidyl transferase domain of the mtLSU rRNA. This activity may require prior 2'-O-methylguanosine modification at position 1580 (Gm1580) by MRM3. Essential for late-stage assembly of mtLSU required for efficient translation of mitochondrial DNA encoded proteins; methyltransferase activity is not required for this function. Essential for mitochondrial respiratory function. The polypeptide is rRNA methyltransferase 2, mitochondrial (Drosophila melanogaster (Fruit fly)).